Here is a 199-residue protein sequence, read N- to C-terminus: Phosphoserine phosphatase RsbX (199 aa).

The PPM-type phosphatase domain occupies 11–198; it reads QTLVYQLNKE…DDLTYILGQL (188 aa).

The catalysed reaction is O-phospho-L-serine + H2O = L-serine + phosphate. It catalyses the reaction O-phospho-D-serine + H2O = D-serine + phosphate. In terms of biological role, negative regulator of sigma-B activity. Dephosphorylates RsbS. Plays a role both in maintaining low sigma-B activity during growth and in reestablishing prestress sigma-B activity after induction. Could have a negative feedback role by indirectly communicating sigma-B protein levels. The polypeptide is Phosphoserine phosphatase RsbX (rsbX) (Bacillus subtilis (strain 168)).